The primary structure comprises 325 residues: Quinolinate synthase (325 aa).

Residues histidine 41 and serine 58 each coordinate iminosuccinate. [4Fe-4S] cluster is bound at residue cysteine 103. Residues 129 to 131 (YIN) and serine 146 each bind iminosuccinate. Cysteine 189 serves as a coordination point for [4Fe-4S] cluster. Iminosuccinate is bound by residues 215 to 217 (HPE) and threonine 232. Cysteine 282 provides a ligand contact to [4Fe-4S] cluster.

Belongs to the quinolinate synthase family. Type 2 subfamily. Requires [4Fe-4S] cluster as cofactor.

It is found in the cytoplasm. It catalyses the reaction iminosuccinate + dihydroxyacetone phosphate = quinolinate + phosphate + 2 H2O + H(+). It participates in cofactor biosynthesis; NAD(+) biosynthesis; quinolinate from iminoaspartate: step 1/1. Catalyzes the condensation of iminoaspartate with dihydroxyacetone phosphate to form quinolinate. The protein is Quinolinate synthase of Rippkaea orientalis (strain PCC 8801 / RF-1) (Cyanothece sp. (strain PCC 8801)).